We begin with the raw amino-acid sequence, 611 residues long: Aspartate--tRNA(Asp/Asn) ligase (611 aa).

Glutamate 177 serves as a coordination point for L-aspartate. Residues 201 to 204 (QLFK) are aspartate. Arginine 223 serves as a coordination point for L-aspartate. Residues 223–225 (RDE) and glutamine 232 each bind ATP. Histidine 461 serves as a coordination point for L-aspartate. Glutamate 499 contributes to the ATP binding site. Arginine 506 serves as a coordination point for L-aspartate. Position 551-554 (551-554 (GVDR)) interacts with ATP.

This sequence belongs to the class-II aminoacyl-tRNA synthetase family. Type 1 subfamily. As to quaternary structure, homodimer.

The protein resides in the cytoplasm. The enzyme catalyses tRNA(Asx) + L-aspartate + ATP = L-aspartyl-tRNA(Asx) + AMP + diphosphate. Aspartyl-tRNA synthetase with relaxed tRNA specificity since it is able to aspartylate not only its cognate tRNA(Asp) but also tRNA(Asn). Reaction proceeds in two steps: L-aspartate is first activated by ATP to form Asp-AMP and then transferred to the acceptor end of tRNA(Asp/Asn). The sequence is that of Aspartate--tRNA(Asp/Asn) ligase from Synechococcus sp. (strain WH7803).